The primary structure comprises 396 residues: Homoserine O-acetyltransferase (396 aa).

One can recognise an AB hydrolase-1 domain in the interval 53–370 (NAILVCHALT…DRGHDAFLLE (318 aa)). Ser158 serves as the catalytic Nucleophile. Arg228 provides a ligand contact to substrate. Residues Asp331 and His364 contribute to the active site. A substrate-binding site is contributed by Asp365.

This sequence belongs to the AB hydrolase superfamily. MetX family. As to quaternary structure, homodimer.

It localises to the cytoplasm. It carries out the reaction L-homoserine + acetyl-CoA = O-acetyl-L-homoserine + CoA. Its pathway is amino-acid biosynthesis; L-methionine biosynthesis via de novo pathway; O-acetyl-L-homoserine from L-homoserine: step 1/1. Functionally, transfers an acetyl group from acetyl-CoA to L-homoserine, forming acetyl-L-homoserine. In Gluconobacter oxydans (strain 621H) (Gluconobacter suboxydans), this protein is Homoserine O-acetyltransferase.